A 396-amino-acid chain; its full sequence is 3-amino-4-hydroxybenzoic acid synthase (396 aa).

Residues 1–29 form a disordered region; sequence MSSSPSPSPSSSSSSSASSSASSSPSSSS.

It belongs to the archaeal-type DHQ synthase family. GriH subfamily. Monomer. Mn(2+) is required as a cofactor.

It catalyses the reaction 2-amino-4,5-dihydroxy-6-oxo-7-(phosphooxy)heptanoate = 3-amino-4-hydroxybenzoate + phosphate + 2 H2O + H(+). Its function is as follows. Catalyzes the cyclization of 2-amino-4,5-dihydroxy-6-one-heptanoic acid-7-phosphate to yield 3-amino-4-hydroxybenzoic acid (3,4-AHBA). The sequence is that of 3-amino-4-hydroxybenzoic acid synthase (griH) from Streptomyces griseus subsp. griseus (strain JCM 4626 / CBS 651.72 / NBRC 13350 / KCC S-0626 / ISP 5235).